Here is a 152-residue protein sequence, read N- to C-terminus: Superoxide dismutase [Cu-Zn] (152 aa).

Position 2 is an N-acetylserine (Ser2). Positions 44, 46, and 61 each coordinate Cu cation. Cys55 and Cys144 are disulfide-bonded. Residues His61, His69, His78, and Asp81 each coordinate Zn(2+). Cu cation is bound at residue His118.

This sequence belongs to the Cu-Zn superoxide dismutase family. As to quaternary structure, monomer. The cofactor is Cu cation. Requires Zn(2+) as cofactor.

The protein localises to the cytoplasm. It carries out the reaction 2 superoxide + 2 H(+) = H2O2 + O2. Inhibited by KCN and diethyldithiocarbamate. Functionally, destroys radicals which are normally produced within the cells and which are toxic to biological systems. The plasma superoxide dismutase has phagocytosis-stimulating activity and may play an important role in the biological defenses of the organism. In Halocynthia roretzi (Sea squirt), this protein is Superoxide dismutase [Cu-Zn].